The primary structure comprises 757 residues: 5-methyltetrahydropteroyltriglutamate--homocysteine methyltransferase (757 aa).

Residues 17–20 (RELK) and Lys115 contribute to the 5-methyltetrahydropteroyltri-L-glutamate site. L-homocysteine-binding positions include 430-432 (IGS) and Glu483. L-methionine contacts are provided by residues 430–432 (IGS) and Glu483. Residues 514-515 (RC) and Trp560 each bind 5-methyltetrahydropteroyltri-L-glutamate. Asp598 provides a ligand contact to L-homocysteine. Asp598 contributes to the L-methionine binding site. Glu604 lines the 5-methyltetrahydropteroyltri-L-glutamate pocket. Zn(2+) contacts are provided by His640, Cys642, and Glu664. The active-site Proton donor is His693. Cys725 lines the Zn(2+) pocket.

Belongs to the vitamin-B12 independent methionine synthase family. The cofactor is Zn(2+).

It catalyses the reaction 5-methyltetrahydropteroyltri-L-glutamate + L-homocysteine = tetrahydropteroyltri-L-glutamate + L-methionine. The protein operates within amino-acid biosynthesis; L-methionine biosynthesis via de novo pathway; L-methionine from L-homocysteine (MetE route): step 1/1. Functionally, catalyzes the transfer of a methyl group from 5-methyltetrahydrofolate to homocysteine resulting in methionine formation. The sequence is that of 5-methyltetrahydropteroyltriglutamate--homocysteine methyltransferase from Buchnera aphidicola subsp. Schizaphis graminum (strain Sg).